The sequence spans 294 residues: Acetyl-coenzyme A carboxylase carboxyl transferase subunit beta (294 aa).

The region spanning 25 to 294 (VWTKCTSCEQ…PLVVPVDGSH (270 aa)) is the CoA carboxyltransferase N-terminal domain. Zn(2+) contacts are provided by cysteine 29, cysteine 32, cysteine 48, and cysteine 51. A C4-type zinc finger spans residues 29 to 51 (CTSCEQVLYSAELERNLEVCPKC).

Belongs to the AccD/PCCB family. Acetyl-CoA carboxylase is a heterohexamer composed of biotin carboxyl carrier protein (AccB), biotin carboxylase (AccC) and two subunits each of ACCase subunit alpha (AccA) and ACCase subunit beta (AccD). It depends on Zn(2+) as a cofactor.

It is found in the cytoplasm. The enzyme catalyses N(6)-carboxybiotinyl-L-lysyl-[protein] + acetyl-CoA = N(6)-biotinyl-L-lysyl-[protein] + malonyl-CoA. It participates in lipid metabolism; malonyl-CoA biosynthesis; malonyl-CoA from acetyl-CoA: step 1/1. Functionally, component of the acetyl coenzyme A carboxylase (ACC) complex. Biotin carboxylase (BC) catalyzes the carboxylation of biotin on its carrier protein (BCCP) and then the CO(2) group is transferred by the transcarboxylase to acetyl-CoA to form malonyl-CoA. The chain is Acetyl-coenzyme A carboxylase carboxyl transferase subunit beta from Aliivibrio fischeri (strain MJ11) (Vibrio fischeri).